Reading from the N-terminus, the 662-residue chain is DCC-interacting protein 13-beta (662 aa).

The region spanning A3–V268 is the BAR domain. In terms of domain architecture, PH spans L277 to R375. The region spanning S486 to D635 is the PID domain. The tract at residues D643–A662 is disordered. The segment covering S653–A662 has biased composition (basic and acidic residues).

In terms of assembly, homodimer. Homotetramer. Binds RAB5A/Rab5 through an N-terminal domain. This interaction is essential for its recruitment to endosomal membranes as well as its role in cell proliferation. Binds subunits of the NuRD/MeCP1 complex. Interacts with FSHR; interaction is independent of follicle stimulating hormone stimulation. Interacts with APPL1; the interaction is decreased by adiponectin in a time-dependent manner. Forms a complex comprising APPL1, RUVBL2, CTNNB1, HDAC1 and HDAC2; interaction reduces interaction between CTNNB1, HDAC1, HDAC2 and RUVBL2 leading to the decrease of deacetylase activity of this complex; affects the recruitment of repressive complexes to the Wnt target genes. Interacts (via BAR domain) with TBC1D1; interaction is dependent of TBC1D1 phosphorylation at 'Ser-235'; interaction diminishes the phosphorylation of TBC1D1 at 'Thr-596', resulting in inhibition of SLC2A4 translocation and glucose uptake. Interacts with ANXA2; targets APPL2 to endosomes and acting in parallel to RAB5A. Interacts with RAB31 (in GTP-bound form); interaction contributes to or enhances recruitment of APPL2 to the phagosomes; interaction enhances Fc-gamma receptor-mediated phagocytosis through PI3K/Akt signaling in macrophages. Interacts with PIK3R1; forms a complex with PIK3R1 and APPL1. Interacts (via BAR domain) with ADIPOR1; hinders the accessibility of APPL1 to ADIPOR1; negatively regulates adiponectin signaling; ADIPOQ dissociates this interaction and facilitates the recruitment of APPL1 to ADIPOR1. Interacts (via BAR domain) with ADIPOR2; ADIPOQ dissociates this interaction.

It localises to the early endosome membrane. Its subcellular location is the nucleus. The protein resides in the cell membrane. The protein localises to the endosome membrane. It is found in the cytoplasm. It localises to the cytoplasmic vesicle. Its subcellular location is the phagosome. The protein resides in the cell projection. The protein localises to the ruffle. It is found in the ruffle membrane. It localises to the phagosome membrane. Multifunctional adapter protein that binds to various membrane receptors, nuclear factors and signaling proteins to regulate many processes, such as cell proliferation, immune response, endosomal trafficking and cell metabolism. Regulates signaling pathway leading to cell proliferation through interaction with RAB5A and subunits of the NuRD/MeCP1 complex. Plays a role in immune response by modulating phagocytosis, inflammatory and innate immune responses. In macrophages, enhances Fc-gamma receptor-mediated phagocytosis through interaction with RAB31 leading to activation of PI3K/Akt signaling. In response to LPS, modulates inflammatory responses by playing a key role on the regulation of TLR4 signaling and in the nuclear translocation of RELA/NF-kappa-B p65 and the secretion of pro- and anti-inflammatory cytokines. Also functions as a negative regulator of innate immune response via inhibition of AKT1 signaling pathway by forming a complex with APPL1 and PIK3R1. Plays a role in endosomal trafficking of TGFBR1 from the endosomes to the nucleus. Plays a role in cell metabolism by regulating adiponecting ans insulin signaling pathways and adaptative thermogenesis. In muscle, negatively regulates adiponectin-simulated glucose uptake and fatty acid oyidation by inhibiting adiponectin signaling pathway through APPL1 sequestration thereby antagonizing APPL1 action. In muscles, negatively regulates insulin-induced plasma membrane recruitment of GLUT4 and glucose uptake through interaction with TBC1D1. Plays a role in cold and diet-induced adaptive thermogenesis by activating ventromedial hypothalamus (VMH) neurons throught AMPK inhibition which enhances sympathetic outflow to subcutaneous white adipose tissue (sWAT), sWAT beiging and cold tolerance. Also plays a role in other signaling pathways namely Wnt/beta-catenin, HGF and glucocorticoid receptor signaling. Positive regulator of beta-catenin/TCF-dependent transcription through direct interaction with RUVBL2/reptin resulting in the relief of RUVBL2-mediated repression of beta-catenin/TCF target genes by modulating the interactions within the beta-catenin-reptin-HDAC complex. May affect adult neurogenesis in hippocampus and olfactory system via regulating the sensitivity of glucocorticoid receptor. Required for fibroblast migration through HGF cell signaling. This Rattus norvegicus (Rat) protein is DCC-interacting protein 13-beta.